A 307-amino-acid polypeptide reads, in one-letter code: MSPFLSFSRATWSELRNSVPMTLSEEDLKALQGINENLTMQEAVEVYLPLSRLLNLYVQARQSRNSVLHQFLNNDEHAPPFVIGIAGSVAVGKSTTARVLCALLSRWENHPKVELVTTDGFLYPKKMLNQRGIMHKKGFPESYDMKKLVQFVSDVKAGKPELEVPVYSHITYDITEEVKRVDRPDVLIIEGLNVLQSGMDYPHDPHRVFVSDFLDFSIYVDAESNTIEQWYVERFLKFRKGAFTQPGSYFSHYTQLSEQQAIEKAQQIWRDINGINLTENILPTKERAQLILRKGQNHLVEEILLRK.

87-94 is an ATP binding site; that stretch reads GSVAVGKS.

It belongs to the prokaryotic pantothenate kinase family.

Its subcellular location is the cytoplasm. It carries out the reaction (R)-pantothenate + ATP = (R)-4'-phosphopantothenate + ADP + H(+). It participates in cofactor biosynthesis; coenzyme A biosynthesis; CoA from (R)-pantothenate: step 1/5. This is Pantothenate kinase from Vibrio vulnificus (strain YJ016).